Here is a 439-residue protein sequence, read N- to C-terminus: Cell division protein FtsA (439 aa).

Belongs to the FtsA/MreB family. Self-interacts. Interacts with FtsZ.

Its subcellular location is the cell inner membrane. In terms of biological role, cell division protein that is involved in the assembly of the Z ring. May serve as a membrane anchor for the Z ring. In Shigella flexneri, this protein is Cell division protein FtsA.